A 156-amino-acid polypeptide reads, in one-letter code: Ribosomal RNA large subunit methyltransferase H (156 aa).

S-adenosyl-L-methionine-binding positions include Leu73, Gly104, and 123–128 (LSALTL).

It belongs to the RNA methyltransferase RlmH family. Homodimer.

It localises to the cytoplasm. The enzyme catalyses pseudouridine(1915) in 23S rRNA + S-adenosyl-L-methionine = N(3)-methylpseudouridine(1915) in 23S rRNA + S-adenosyl-L-homocysteine + H(+). Functionally, specifically methylates the pseudouridine at position 1915 (m3Psi1915) in 23S rRNA. This Shewanella pealeana (strain ATCC 700345 / ANG-SQ1) protein is Ribosomal RNA large subunit methyltransferase H.